We begin with the raw amino-acid sequence, 149 residues long: Large ribosomal subunit protein uL15 (149 aa).

Residues 1–64 are disordered; sequence MVELHDLQPH…GQTPLYMRIP (64 aa). The span at 31 to 40 shows a compositional bias: basic residues; sequence TAGRGHKGQK.

It belongs to the universal ribosomal protein uL15 family. Part of the 50S ribosomal subunit.

Functionally, binds to the 23S rRNA. In Aquifex aeolicus (strain VF5), this protein is Large ribosomal subunit protein uL15.